The following is a 291-amino-acid chain: tRNA dimethylallyltransferase (291 aa).

9 to 16 (GTTASGKT) is a binding site for ATP. Substrate is bound at residue 11 to 16 (TASGKT). The interval 34 to 37 (DSLC) is interaction with substrate tRNA.

This sequence belongs to the IPP transferase family. In terms of assembly, monomer. Requires Mg(2+) as cofactor.

The enzyme catalyses adenosine(37) in tRNA + dimethylallyl diphosphate = N(6)-dimethylallyladenosine(37) in tRNA + diphosphate. Functionally, catalyzes the transfer of a dimethylallyl group onto the adenine at position 37 in tRNAs that read codons beginning with uridine, leading to the formation of N6-(dimethylallyl)adenosine (i(6)A). The sequence is that of tRNA dimethylallyltransferase from Campylobacter lari (strain RM2100 / D67 / ATCC BAA-1060).